The following is a 126-amino-acid chain: Large ribosomal subunit protein uL22 (126 aa).

Belongs to the universal ribosomal protein uL22 family. As to quaternary structure, part of the 50S ribosomal subunit.

Its function is as follows. This protein binds specifically to 23S rRNA; its binding is stimulated by other ribosomal proteins, e.g. L4, L17, and L20. It is important during the early stages of 50S assembly. It makes multiple contacts with different domains of the 23S rRNA in the assembled 50S subunit and ribosome. Functionally, the globular domain of the protein is located near the polypeptide exit tunnel on the outside of the subunit, while an extended beta-hairpin is found that lines the wall of the exit tunnel in the center of the 70S ribosome. This is Large ribosomal subunit protein uL22 from Jannaschia sp. (strain CCS1).